Consider the following 354-residue polypeptide: Protein-arginine kinase (354 aa).

Positions 24-254 (IVLSSRIRLA…QQIIQQEKMA (231 aa)) constitute a Phosphagen kinase C-terminal domain. ATP is bound by residues 27 to 31 (SSRIR), His-92, Arg-125, 176 to 180 (RASVM), and 207 to 212 (RGIYGE). Positions 337–342 (RDYRRA) match the RDXXRA motif of the pArg binding pocket involved in allosteric regulation motif.

Belongs to the ATP:guanido phosphotransferase family.

The catalysed reaction is L-arginyl-[protein] + ATP = N(omega)-phospho-L-arginyl-[protein] + ADP + H(+). Appears to be allosterically activated by the binding of pArg-containing polypeptides to the pArg-binding pocket localized in the C-terminal domain of McsB. Catalyzes the specific phosphorylation of arginine residues in a large number of proteins. Is part of the bacterial stress response system. Protein arginine phosphorylation has a physiologically important role and is involved in the regulation of many critical cellular processes, such as protein homeostasis, motility, competence, and stringent and stress responses, by regulating gene expression and protein activity. The chain is Protein-arginine kinase from Bacillus thuringiensis subsp. konkukian (strain 97-27).